Consider the following 249-residue polypeptide: Protein-lysine 6-oxidase (249 aa).

Position 19 is a sulfotyrosine (tyrosine 19). The segment at 45 to 249 is lysyl-oxidase like; the sequence is PDLVPDPYYI…YASGCTISPY (205 aa). Intrachain disulfides connect cysteine 70–cysteine 76, cysteine 123–cysteine 172, cysteine 156–cysteine 162, cysteine 183–cysteine 193, and cysteine 230–cysteine 244. Cu cation-binding residues include histidine 124, histidine 126, and histidine 128. A cross-link (lysine tyrosylquinone (Lys-Tyr)) is located at residues 152-187; that stretch reads KASFCLEDTSCDYGYHRRFACTAHTQGLSPGCYDTY. Tyrosine 187 is modified (2',4',5'-topaquinone).

Belongs to the lysyl oxidase family. As to quaternary structure, interacts with MFAP4. Interacts (via propeptide) with EFEMP2; this interaction is strong and facilitates formation of ternary complexes with ELN during elastic fiber assembly; this interaction limits interaction of EFEMP2 with FBLN5. Cu cation serves as cofactor. Requires lysine tyrosylquinone residue as cofactor. Post-translationally, the lysine tyrosylquinone cross-link (LTQ) is generated by condensation of the epsilon-amino group of a lysine with a topaquinone produced by oxidation of tyrosine. In terms of processing, proteolytically cleaved by BMP1 which removes the propeptide. Also proteolytically cleaved by ADAMTS2 and ADAMTS14, but not by ADAMTS3, at an additional cleavage site downstream of the BMP1 cleavage site. The propeptide plays a role in directing the deposition of this enzyme to elastic fibers, via interaction with tropoelastin. Cleavage by BMP1 to remove the propeptide does not increase enzymatic activity but increases binding to collagen. Cleavage by ADAMTS2 produces a form with reduced collagen-binding activity. Sulfated at Tyr-19 and also at either Tyr-15 or Tyr-16 which enhances binding to collagen.

The protein localises to the secreted. The protein resides in the extracellular space. The catalysed reaction is L-lysyl-[protein] + O2 + H2O = (S)-2-amino-6-oxohexanoyl-[protein] + H2O2 + NH4(+). Responsible for the post-translational oxidative deamination of peptidyl lysine residues in precursors to fibrous collagen and elastin. Regulator of Ras expression. May play a role in tumor suppression. Plays a role in the aortic wall architecture. The chain is Protein-lysine 6-oxidase from Sus scrofa (Pig).